The sequence spans 429 residues: 3-phosphoshikimate 1-carboxyvinyltransferase (429 aa).

Lysine 20, serine 21, and arginine 25 together coordinate 3-phosphoshikimate. Phosphoenolpyruvate is bound at residue lysine 20. Phosphoenolpyruvate-binding residues include glycine 89 and arginine 118. 3-phosphoshikimate contacts are provided by serine 164, serine 165, glutamine 166, serine 192, aspartate 311, and lysine 338. A phosphoenolpyruvate-binding site is contributed by glutamine 166. Aspartate 311 functions as the Proton acceptor in the catalytic mechanism. Phosphoenolpyruvate contacts are provided by arginine 342 and arginine 384.

This sequence belongs to the EPSP synthase family. In terms of assembly, monomer.

The protein localises to the cytoplasm. It catalyses the reaction 3-phosphoshikimate + phosphoenolpyruvate = 5-O-(1-carboxyvinyl)-3-phosphoshikimate + phosphate. It functions in the pathway metabolic intermediate biosynthesis; chorismate biosynthesis. In terms of biological role, catalyzes the transfer of the enolpyruvyl moiety of phosphoenolpyruvate (PEP) to the 5-hydroxyl of shikimate-3-phosphate (S3P) to produce enolpyruvyl shikimate-3-phosphate and inorganic phosphate. The sequence is that of 3-phosphoshikimate 1-carboxyvinyltransferase from Methanococcus maripaludis (strain C7 / ATCC BAA-1331).